The sequence spans 206 residues: Protein tyrosine phosphatase receptor type C-associated protein (206 aa).

The chain crosses the membrane as a helical span at residues 34–54 (VTVVLLLLLLLLLATGLALAW). Residues 98 to 173 (GSTDNDLERQ…PGPASAGGSA (76 aa)) are disordered. Phosphoserine is present on residues serine 99 and serine 153. A compositionally biased stretch (low complexity) spans 161–173 (LGSPGPASAGGSA).

Interacts with CD45/PTPRC. In terms of processing, phosphorylated on tyrosine residues.

The protein resides in the membrane. This Homo sapiens (Human) protein is Protein tyrosine phosphatase receptor type C-associated protein (PTPRCAP).